We begin with the raw amino-acid sequence, 322 residues long: Pilin gene-inverting protein (322 aa).

May be the site-specific invertase required for pilin gene inversion. Moraxella can express either a Q or I pilin; the inversion of 2 kb of DNA determines which pilin is expressed. The polypeptide is Pilin gene-inverting protein (piv) (Moraxella bovis).